The primary structure comprises 339 residues: 5-dehydro-2-deoxygluconokinase (339 aa).

It belongs to the carbohydrate kinase PfkB family.

The catalysed reaction is 5-dehydro-2-deoxy-D-gluconate + ATP = 6-phospho-5-dehydro-2-deoxy-D-gluconate + ADP + H(+). The protein operates within polyol metabolism; myo-inositol degradation into acetyl-CoA; acetyl-CoA from myo-inositol: step 5/7. Functionally, catalyzes the phosphorylation of 5-dehydro-2-deoxy-D-gluconate (2-deoxy-5-keto-D-gluconate or DKG) to 6-phospho-5-dehydro-2-deoxy-D-gluconate (DKGP). The polypeptide is 5-dehydro-2-deoxygluconokinase (Clostridium beijerinckii (strain ATCC 51743 / NCIMB 8052) (Clostridium acetobutylicum)).